Here is a 213-residue protein sequence, read N- to C-terminus: 3-demethoxyubiquinol 3-hydroxylase (213 aa).

6 residues coordinate Fe cation: Glu-62, Glu-92, His-95, Glu-144, Glu-176, and His-179.

This sequence belongs to the COQ7 family. Requires Fe cation as cofactor.

Its subcellular location is the cell membrane. It carries out the reaction a 5-methoxy-2-methyl-3-(all-trans-polyprenyl)benzene-1,4-diol + AH2 + O2 = a 3-demethylubiquinol + A + H2O. It participates in cofactor biosynthesis; ubiquinone biosynthesis. Catalyzes the hydroxylation of 2-nonaprenyl-3-methyl-6-methoxy-1,4-benzoquinol during ubiquinone biosynthesis. In Legionella pneumophila (strain Paris), this protein is 3-demethoxyubiquinol 3-hydroxylase.